The chain runs to 482 residues: Matrix metalloproteinase-20 (482 aa).

A signal peptide spans 1–21; the sequence is MKVLPASGLAVLVTALKFATA. Residues 22-106 constitute a propeptide that is removed on maturation; it reads DPNLLAATPR…PRCGVPDVAN (85 aa). A Cysteine switch motif is present at residues 97 to 104; it reads PRCGVPDV. C99 contacts Zn(2+). Residues E163, A164, and D165 each contribute to the Ca(2+) site. Residues H175 and D177 each coordinate Zn(2+). Positions 182, 183, 185, and 187 each coordinate Ca(2+). Position 190 (H190) interacts with Zn(2+). Ca(2+) contacts are provided by E196, G197, G199, and D201. H203 serves as a coordination point for Zn(2+). Ca(2+) is bound by residues D205 and E208. H225 serves as a coordination point for Zn(2+). The active site involves E226. Residues H229 and H235 each contribute to the Zn(2+) site. 4 Hemopexin repeats span residues 292–342, 343–388, 390–438, and 439–482; these read PDLC…FPQL, MSNV…GFPR, VQRI…FSGV, and SGHI…WIGC. A disulfide bridge connects residues C295 and C482.

The protein belongs to the peptidase M10A family. Zn(2+) is required as a cofactor. Requires Ca(2+) as cofactor. Autoactivates at least at the 106-Asn-|-Tyr-107 site. As to expression, expressed in the enamel organ.

The protein resides in the secreted. It localises to the extracellular space. Its subcellular location is the extracellular matrix. Degrades amelogenin, the major protein component of the enamel matrix and two of the macromolecules characterizing the cartilage extracellular matrix: aggrecan and the cartilage oligomeric matrix protein (COMP). May play a central role in tooth enamel formation. Cleaves aggrecan at the '360-Asn-|-Phe-361' site. In Mus musculus (Mouse), this protein is Matrix metalloproteinase-20 (Mmp20).